A 377-amino-acid chain; its full sequence is 5-hydroxytryptamine receptor 1D (377 aa).

3 N-linked (GlcNAc...) asparagine glycosylation sites follow: N5, N17, and N21. Helical transmembrane passes span 39–64 (ISLA…TTIF), 76–97 (LIGS…ISIA), and 110–134 (LCDI…VIAL). C111 and C188 are joined by a disulfide. Positions 118 and 122 each coordinate serotonin. The DRY motif; important for ligand-induced conformation changes motif lies at 135–137 (DRY). Helical transmembrane passes span 155–176 (AAVM…PLFW), 195–218 (ISYT…ILYG), 301–326 (KTLG…VLPI), and 336–359 (ALFD…YTVF). S321 contacts serotonin. Residues 352 to 356 (NPIIY) carry the NPxxY motif; important for ligand-induced conformation changes and signaling motif.

The protein belongs to the G-protein coupled receptor 1 family. As to quaternary structure, homodimer. Heterodimer with HTR1B.

The protein resides in the cell membrane. In terms of biological role, G-protein coupled receptor for 5-hydroxytryptamine (serotonin). Also functions as a receptor for ergot alkaloid derivatives, various anxiolytic and antidepressant drugs and other psychoactive substances. Ligand binding causes a conformation change that triggers signaling via guanine nucleotide-binding proteins (G proteins) and modulates the activity of downstream effectors, such as adenylate cyclase. HTR1D is coupled to G(i)/G(o) G alpha proteins and mediates inhibitory neurotransmission by inhibiting adenylate cyclase activity. Regulates the release of 5-hydroxytryptamine in the brain, and thereby affects neural activity. May also play a role in regulating the release of other neurotransmitters. May play a role in vasoconstriction. The chain is 5-hydroxytryptamine receptor 1D (HTR1D) from Canis lupus familiaris (Dog).